The primary structure comprises 93 residues: Phosphoribosyl-ATP pyrophosphatase (93 aa).

The protein belongs to the PRA-PH family.

It is found in the cytoplasm. The enzyme catalyses 1-(5-phospho-beta-D-ribosyl)-ATP + H2O = 1-(5-phospho-beta-D-ribosyl)-5'-AMP + diphosphate + H(+). It functions in the pathway amino-acid biosynthesis; L-histidine biosynthesis; L-histidine from 5-phospho-alpha-D-ribose 1-diphosphate: step 2/9. In Corynebacterium aurimucosum (strain ATCC 700975 / DSM 44827 / CIP 107346 / CN-1) (Corynebacterium nigricans), this protein is Phosphoribosyl-ATP pyrophosphatase.